Reading from the N-terminus, the 220-residue chain is Small ribosomal subunit protein uS5 (220 aa).

Residues 1-39 form a disordered region; the sequence is MAEQPAGQAGTTDNRDARGDREGRRRDSGRGSRERDGEK. Residues 13-39 are compositionally biased toward basic and acidic residues; sequence DNRDARGDREGRRRDSGRGSRERDGEK. The S5 DRBM domain maps to 42–105; the sequence is YLERVVAINR…EEARKSFFRV (64 aa).

The protein belongs to the universal ribosomal protein uS5 family. In terms of assembly, part of the 30S ribosomal subunit. Contacts proteins S4 and S8.

In terms of biological role, with S4 and S12 plays an important role in translational accuracy. Located at the back of the 30S subunit body where it stabilizes the conformation of the head with respect to the body. The sequence is that of Small ribosomal subunit protein uS5 from Mycobacterium bovis (strain ATCC BAA-935 / AF2122/97).